The sequence spans 1901 residues: Methylcytosine dioxygenase tet3 (1901 aa).

Residues 58–99 (SNKKRKRCGVCVPCLRKEPCGACYNCVNRSTSHQICKMRKCE) form a CXXC-type zinc finger. Positions 65, 68, 71, 77, 80, 83, 93, and 98 each coordinate Zn(2+). Disordered stretches follow at residues 434–455 (KNAL…KKSS), 602–658 (WWVP…EGSA), 751–787 (KDQC…QNDL), and 808–867 (DFSL…PVSR). 2 stretches are compositionally biased toward polar residues: residues 442 to 455 (SPRQ…KKSS) and 602 to 614 (WWVP…PVSK). Residues 640 to 652 (KPQRKQVQIKKPK) are compositionally biased toward basic residues. Positions 758 to 771 (STHDTSSSSGQGDS) are enriched in low complexity. The span at 847-867 (ENSTKPATHSNPALSNNPVSR) shows a compositional bias: polar residues. Residues Cys957, Cys959, Cys1017, His1043, and Cys1045 each coordinate Zn(2+). Arg1085 is a binding site for 2-oxoglutarate. Residues Cys1095, Cys1097, Cys1113, Cys1122, and Cys1182 each contribute to the Zn(2+) site. Cys1198 serves as a coordination point for 2-oxoglutarate. His1204 lines the Zn(2+) pocket. Residues His1206 and Asp1208 each contribute to the Fe cation site. His1240 serves as a coordination point for 2-oxoglutarate. Disordered regions lie at residues 1282 to 1338 (SEPA…QQTK), 1457 to 1501 (YGSE…VETT), 1591 to 1624 (SNAP…PGKV), and 1680 to 1745 (SATP…DEEI). A compositionally biased stretch (basic and acidic residues) spans 1291–1325 (RQLEAKKAAAEKKKLQKEKLVSPDKTKQEPSDKKT). Over residues 1326–1338 (CQQNPGVPQQQTK) the composition is skewed to polar residues. The span at 1465 to 1474 (SFRRSSEVPH) shows a compositional bias: basic and acidic residues. The span at 1477–1487 (SLQNPSSQKSV) shows a compositional bias: polar residues. 2 stretches are compositionally biased toward polar residues: residues 1680–1693 (SATP…TPCS) and 1702–1719 (SFPN…SQNH). Fe cation is bound at residue His1780. Position 1795–1797 (1795–1797 (RIS)) interacts with 2-oxoglutarate.

It belongs to the TET family. Requires Fe(2+) as cofactor. Zn(2+) is required as a cofactor.

The protein resides in the nucleus. It is found in the chromosome. It carries out the reaction a 5-methyl-2'-deoxycytidine in DNA + 2-oxoglutarate + O2 = a 5-hydroxymethyl-2'-deoxycytidine in DNA + succinate + CO2. The enzyme catalyses a 5-hydroxymethyl-2'-deoxycytidine in DNA + 2-oxoglutarate + O2 = a 5-formyl-2'-deoxycytidine in DNA + succinate + CO2 + H2O. The catalysed reaction is a 5-formyl-2'-deoxycytidine in DNA + 2-oxoglutarate + O2 = a 5-carboxyl-2'-deoxycytidine in DNA + succinate + CO2 + H(+). In terms of biological role, dioxygenase that catalyzes the conversion of the modified genomic base 5-methylcytosine (5mC) into 5-hydroxymethylcytosine (5hmC) and plays a key role in epigenetic chromatin reprogramming during embryonic development. Conversion of 5mC into 5hmC probably constitutes the first step in cytosine demethylation. Selectively binds to the promoter region of target genes and contributes to regulate the expression of numerous developmental genes, including pax6, rax, sox9 and six3. May also contribute to the regulation of target genes in ways that do not require its enzyme activity. This chain is Methylcytosine dioxygenase tet3, found in Xenopus tropicalis (Western clawed frog).